We begin with the raw amino-acid sequence, 601 residues long: Sulfite reductase [NADPH] flavoprotein alpha-component (601 aa).

Residues 65–203 form the Flavodoxin-like domain; sequence ITIISASQTG…NYNKWSQDLL (139 aa). FMN is bound by residues 71–76, 118–121, and 154–163; these read SQTGNA, STQG, and LGDTSYNLFC. The 215-residue stretch at 236-450 folds into the FAD-binding FR-type domain; that stretch reads KNPAEGIILT…IQTNDNFRLP (215 aa). FAD is bound by residues threonine 324, isoleucine 358, 388–391, 406–408, and 421–424; these read RLYS, TVG, and GGAS. Residues 521-522, 527-531, and aspartate 563 contribute to the NADP(+) site; these read SQ and KIYVQ. Tyrosine 601 provides a ligand contact to FAD.

This sequence belongs to the NADPH-dependent sulphite reductase flavoprotein subunit CysJ family. It in the N-terminal section; belongs to the flavodoxin family. The protein in the C-terminal section; belongs to the flavoprotein pyridine nucleotide cytochrome reductase family. As to quaternary structure, alpha(8)-beta(8). The alpha component is a flavoprotein, the beta component is a hemoprotein. The cofactor is FAD. Requires FMN as cofactor.

It carries out the reaction hydrogen sulfide + 3 NADP(+) + 3 H2O = sulfite + 3 NADPH + 4 H(+). The protein operates within sulfur metabolism; hydrogen sulfide biosynthesis; hydrogen sulfide from sulfite (NADPH route): step 1/1. Its function is as follows. Component of the sulfite reductase complex that catalyzes the 6-electron reduction of sulfite to sulfide. This is one of several activities required for the biosynthesis of L-cysteine from sulfate. The flavoprotein component catalyzes the electron flow from NADPH -&gt; FAD -&gt; FMN to the hemoprotein component. This is Sulfite reductase [NADPH] flavoprotein alpha-component from Buchnera aphidicola subsp. Acyrthosiphon pisum (strain APS) (Acyrthosiphon pisum symbiotic bacterium).